A 24-amino-acid chain; its full sequence is Small ribosomal subunit protein uS19c (24 aa).

This sequence belongs to the universal ribosomal protein uS19 family.

The protein localises to the plastid. It is found in the chloroplast. Its function is as follows. Protein S19 forms a complex with S13 that binds strongly to the 16S ribosomal RNA. The chain is Small ribosomal subunit protein uS19c (rps19) from Petunia hybrida (Petunia).